The following is a 224-amino-acid chain: MSTELVEDETQFYGKAQNYWKNVPPTVDGMLGGYGHISNVDLNGSKKFLQRFLRQEGSNKTGNACALDCGAGIGRITKRLLLPLFKTVDMVDVTDEFLNKAKSFLGEEGKRVGNYFCCGLQEFSPEPNRYDVIWIQWVIGHLTDEHLVNFLQRCRLGLRPNGIIVIKDNVTQDASIMDDVDSSICREIDLVRKLIKQAGLSILAVERQENFPDEIYHVFSFAMR.

Residues glycine 70, arginine 75, 92–94 (DVT), 120–121 (LQ), and glutamine 136 contribute to the S-adenosyl-L-methionine site.

The protein belongs to the methyltransferase superfamily. NTM1 family.

The protein resides in the nucleus. It carries out the reaction N-terminal L-alanyl-L-prolyl-L-lysyl-[protein] + 3 S-adenosyl-L-methionine = N-terminal N,N,N-trimethyl-L-alanyl-L-prolyl-L-lysyl-[protein] + 3 S-adenosyl-L-homocysteine + 3 H(+). The catalysed reaction is N-terminal L-seryl-L-prolyl-L-lysyl-[protein] + 3 S-adenosyl-L-methionine = N-terminal N,N,N-trimethyl-L-seryl-L-prolyl-L-lysyl-[protein] + 3 S-adenosyl-L-homocysteine + 3 H(+). The enzyme catalyses N-terminal L-prolyl-L-prolyl-L-lysyl-[protein] + 2 S-adenosyl-L-methionine = N-terminal N,N-dimethyl-L-prolyl-L-prolyl-L-lysyl-[protein] + 2 S-adenosyl-L-homocysteine + 2 H(+). Distributive alpha-N-methyltransferase that methylates the N-terminus of target proteins containing the N-terminal motif [Ala/Gly/Pro/Ser]-Pro-Lys when the initiator Met is cleaved. Specifically catalyzes mono-, di- or tri-methylation of the exposed alpha-amino group of the Ala, Gly or Ser residue in the [Ala/Gly/Ser]-Pro-Lys motif and mono- or di-methylation of Pro in the Pro-Pro-Lys motif. Required during mitosis for normal bipolar spindle formation and chromosome segregation via its action on target proteins. In Xenopus laevis (African clawed frog), this protein is N-terminal Xaa-Pro-Lys N-methyltransferase 1-A (ntmt1-a).